A 221-amino-acid chain; its full sequence is Small ribosomal subunit protein uS3 (221 aa).

Residues 39-107 form the KH type-2 domain; that stretch reads IRNYIKEKLY…TVILNIIEVK (69 aa).

The protein belongs to the universal ribosomal protein uS3 family. In terms of assembly, part of the 30S ribosomal subunit. Forms a tight complex with proteins S10 and S14.

Binds the lower part of the 30S subunit head. Binds mRNA in the 70S ribosome, positioning it for translation. The protein is Small ribosomal subunit protein uS3 of Caldanaerobacter subterraneus subsp. tengcongensis (strain DSM 15242 / JCM 11007 / NBRC 100824 / MB4) (Thermoanaerobacter tengcongensis).